A 166-amino-acid chain; its full sequence is CDP-archaeol synthase (166 aa).

4 helical membrane passes run 39 to 59 (IRGF…QMYA), 61 to 81 (ISGL…LLAI), 104 to 124 (EWFL…TLLF), and 127 to 147 (IWML…LTPL).

It belongs to the CDP-archaeol synthase family. The cofactor is Mg(2+).

It is found in the cell membrane. It carries out the reaction 2,3-bis-O-(geranylgeranyl)-sn-glycerol 1-phosphate + CTP + H(+) = CDP-2,3-bis-O-(geranylgeranyl)-sn-glycerol + diphosphate. The protein operates within membrane lipid metabolism; glycerophospholipid metabolism. Catalyzes the formation of CDP-2,3-bis-(O-geranylgeranyl)-sn-glycerol (CDP-archaeol) from 2,3-bis-(O-geranylgeranyl)-sn-glycerol 1-phosphate (DGGGP) and CTP. This reaction is the third ether-bond-formation step in the biosynthesis of archaeal membrane lipids. This is CDP-archaeol synthase from Methanospirillum hungatei JF-1 (strain ATCC 27890 / DSM 864 / NBRC 100397 / JF-1).